The primary structure comprises 633 residues: Opioid growth factor receptor (633 aa).

M1 bears the N-acetylmethionine mark. Residues 1–38 show a composition bias toward acidic residues; it reads MDDPECDSTWEDESEEDGEDGQADDTTDEDTGDDDGDA. The segment at 1 to 44 is disordered; it reads MDDPECDSTWEDESEEDGEDGQADDTTDEDTGDDDGDAEEARPS. The Bipartite nuclear localization signal motif lies at 257–286; that stretch reads RRELVHFAWEHFKPRREFVWGPRDKLRRFR. Residues 287-390 form a disordered region; the sequence is PQTISRPLMG…EPDPQGVSEV (104 aa). Phosphoserine occurs at positions 327, 340, 361, 365, 403, and 452. Residues 351–374 show a composition bias toward basic and acidic residues; sequence GDQRHEAKSPSPKESKKRKLEGNR. The tract at residues 404 to 633 is disordered; the sequence is PTSQEPREAE…IEASVEPPKP (230 aa). A compositionally biased stretch (polar residues) spans 441–455; that stretch reads ASNTQVQASALSPTP. 14 consecutive repeat copies span residues 467-475, 476-484, 485-493, 494-502, 503-511, 512-520, 521-529, 530-538, 539-547, 548-556, 557-565, 566-574, 575-583, and 584-592. The interval 467–592 is 14 X approximate tandem repeats; the sequence is GPEDPKSQVG…VGPEDPQSQV (126 aa). The segment covering 505 to 517 has biased composition (basic and acidic residues); that stretch reads EDPKGQVEPEDPK. The span at 550 to 580 shows a compositional bias: basic and acidic residues; that stretch reads EDPKSQVEPEDPKSQVEPEDPKSQVEPEDPK. Residues S601 and S608 each carry the phosphoserine modification.

This sequence belongs to the opioid growth factor receptor family. Expressed in all tissues examined, including brain, heart, lung, liver, kidney and skeletal muscle.

Its subcellular location is the cytoplasm. The protein localises to the nucleus. Functionally, receptor for opioid growth factor (OGF), also known as Met-enkephalin. Seems to be involved in growth regulation. This is Opioid growth factor receptor (Ogfr) from Mus musculus (Mouse).